The primary structure comprises 263 residues: Polyamine aminopropyltransferase (263 aa).

The PABS domain occupies 1–221; sequence MARHPYRRLR…AVMAFQSSPK (221 aa). Residues Asp98 and 126-127 each bind S-methyl-5'-thioadenosine; that span reads DG. Catalysis depends on Asp144, which acts as the Proton acceptor.

This sequence belongs to the spermidine/spermine synthase family. As to quaternary structure, homodimer or homotetramer.

It is found in the cytoplasm. The enzyme catalyses S-adenosyl 3-(methylsulfanyl)propylamine + putrescine = S-methyl-5'-thioadenosine + spermidine + H(+). It functions in the pathway amine and polyamine biosynthesis; spermidine biosynthesis; spermidine from putrescine: step 1/1. Functionally, catalyzes the irreversible transfer of a propylamine group from the amino donor S-adenosylmethioninamine (decarboxy-AdoMet) to putrescine (1,4-diaminobutane) to yield spermidine. This is Polyamine aminopropyltransferase from Neisseria meningitidis serogroup A / serotype 4A (strain DSM 15465 / Z2491).